The sequence spans 455 residues: Zinc finger protein ZPR1 homolog (455 aa).

C4-type zinc fingers lie at residues 28-60 (CPVCEEDGETRIMCTSIPYYRAVILMSFECPHC) and 247-279 (CPNCHGPTEVKMKPTDIPFFQTVIIMSLACDRC).

Belongs to the ZPR1 family.

Its subcellular location is the nucleus. This Caenorhabditis elegans protein is Zinc finger protein ZPR1 homolog.